A 915-amino-acid polypeptide reads, in one-letter code: WD repeat-containing protein 44 (915 aa).

Positions 1 to 14 (MASESDTEEFYDAP) are enriched in acidic residues. Residues 1–24 (MASESDTEEFYDAPEDVHLGTGYP) form a disordered region. Position 2 is an N-acetylalanine (Ala2). The interval 2-173 (ASESDTEEFY…SSGEQLDASG (172 aa)) is binding activity. A Phosphoserine modification is found at Ser3. The FFAT-like motif motif lies at 9 to 15 (EFYDAPE). Position 11 is a phosphotyrosine (Tyr11). Ser27, Ser50, Ser66, Ser71, Ser81, and Ser126 each carry phosphoserine. Disordered regions lie at residues 79 to 102 (DDSL…VAGT), 117 to 174 (LQQD…ASGL), and 208 to 282 (VEEV…PKEN). A coiled-coil region spans residues 114 to 139 (EHELQQDSEKAESQNVAEESELETQK). Over residues 146-155 (TCEKSEKTVD) the composition is skewed to basic and acidic residues. A phosphothreonine mark is found at Thr161 and Thr221. An important for interaction with ARHGAP26 AND ARHGAP10 region spans residues 213 to 259 (PAKPPRHLTPEPDIVASTKKPVPARPPPPTNFPPPRPPPPSRPAPPP). The span at 235-258 (PARPPPPTNFPPPRPPPPSRPAPP) shows a compositional bias: pro residues. A Phosphoserine modification is found at Ser264. Positions 264 to 280 (SELEFEALKTPDLDVPK) are enriched in basic and acidic residues. Thr273 bears the Phosphothreonine mark. Positions 336–349 (VMGPQRPRSNSGRE) are important for interaction with RAB11A. 2 positions are modified to phosphoserine: Ser344 and Ser346. Phosphothreonine occurs at positions 351 and 403. Disordered regions lie at residues 399–425 (SNDA…RLKQ) and 461–481 (DEVF…GMPY). Residues Ser405, Ser472, Ser473, and Ser474 each carry the phosphoserine modification. Positions 469–478 (DDPSSSDDEG) are enriched in acidic residues. Residue Tyr481 is modified to Phosphotyrosine. The stretch at 511–550 (EHMGAVWTMKFSHCGRLLASAGQDNIVRIWALKNAFDYFN) is one WD 1 repeat. The interval 559–593 (EGRVSPSPSQESLSSSKSDTDMGVCSGTDEDPDDK) is disordered. Residues Ser563 and Ser567 each carry the phosphoserine modification. The span at 563–575 (SPSPSQESLSSSK) shows a compositional bias: low complexity. WD repeat units follow at residues 607-645 (GHTA…CLCC), 647-687 (QHID…VALW), 692-731 (GQTK…YHTQ), 742-781 (KVGR…LSMK), 786-825 (VNSS…SKFT), 840-880 (AHNA…EVLD), and 882-915 (TSTG…KTVS).

In terms of assembly, interacts with the GTP-bound form of RAB11 when membrane-associated. Interacts with GRAF1/ARHGAP26 or GRAF2/ARHGAP10; the interaction connects the endoplasmic reticulum (ER) with the endosomal tubule. Interacts (via FFAT-like motif) with VAPA (via MSP domain) or VAPB (via MSP domain); the interaction connects the ER with the endosomal tubule. Does not bind to other Rab and Rho small G proteins. Post-translationally, phosphorylated by ATK1; the phosphorylation stabilizes its interaction with RAB11A and RAB11B.

The protein localises to the cytoplasm. It localises to the cytosol. Its subcellular location is the perinuclear region. It is found in the endosome membrane. The protein resides in the golgi apparatus. The protein localises to the trans-Golgi network. Functionally, downstream effector for Rab11 which regulates Rab11 intracellular membrane trafficking functions such as endocytic recycling, intracellular ciliogenesis and protein export. ATK1-mediated phosphorylation of WDR44 induces binding to Rab11 which activates endocytic recycling of transferrin receptor back to the plasma membrane. When bound to Rab11, prevents the formation of the ciliogenic Rab11-Rabin8/RAB3IP-RAB11FIP3 complex, therefore inhibiting preciliary trafficking and ciliogenesis. Participates in neo-synthesized protein export by connecting the endoplasmic reticulum (ER) with the endosomal tubule via direct interactions with the integral ER proteins VAPA or VAPB and the endosomal protein GRAFs (GRAF1/ARHGAP26 or GRAF2/ARHGAP10), which facilitates the transfer of proteins such as E-cadherin, MPP14 and CFTR into a Rab8-Rab10-Rab11-dependent export route. This Mus musculus (Mouse) protein is WD repeat-containing protein 44.